A 128-amino-acid chain; its full sequence is Probable 4-amino-4-deoxy-L-arabinose-phosphoundecaprenol flippase subunit ArnF (128 aa).

Topologically, residues 1 to 2 (MG) are cytoplasmic. The chain crosses the membrane as a helical span at residues 3-23 (LIWGLFSVIIASVAQLSLGFA). Residues 24-35 (ASHLPPMTHLWD) are Periplasmic-facing. Residues 36 to 56 (FIAALLAFGLDARILLLGLLG) form a helical membrane-spanning segment. The Cytoplasmic segment spans residues 57–75 (YLLSVFCWYKTLHKLALSK). A helical transmembrane segment spans residues 76 to 96 (AYALLSMSYVLVWIASMVLPG). At 97–100 (REGT) the chain is on the periplasmic side. The chain crosses the membrane as a helical span at residues 101–121 (FSLKALLGVACIMSGLMLIFL). The Cytoplasmic segment spans residues 122–128 (PTTKQRY).

Belongs to the ArnF family. In terms of assembly, heterodimer of ArnE and ArnF.

It is found in the cell inner membrane. Its pathway is bacterial outer membrane biogenesis; lipopolysaccharide biosynthesis. Its function is as follows. Translocates 4-amino-4-deoxy-L-arabinose-phosphoundecaprenol (alpha-L-Ara4N-phosphoundecaprenol) from the cytoplasmic to the periplasmic side of the inner membrane. The polypeptide is Probable 4-amino-4-deoxy-L-arabinose-phosphoundecaprenol flippase subunit ArnF (Shigella flexneri serotype 5b (strain 8401)).